A 97-amino-acid chain; its full sequence is Ribosomal biogenesis factor (97 aa).

At S19 the chain carries Phosphoserine. K21 carries the post-translational modification N6-acetyllysine. Residue S69 is modified to Phosphoserine.

Associates with the pre-60S ribosomal particles.

The protein resides in the nucleus. It localises to the nucleolus. Its function is as follows. Trans-acting factor in ribosome biogenesis required for efficient 40S and 60S subunit production. This Mus musculus (Mouse) protein is Ribosomal biogenesis factor (Rbis).